The following is a 387-amino-acid chain: MKKILGIESSCDDTAISIITESRKILSNIIIPQNTEHAVFGGVVPEIAARSHLSNLDQALENVLTKSNTELTEISAIAATSGPGLIGGVIVGSMFARSLSSALNKPFIAINHLEGHALTVRLTDNISYPYLLLLASGGHCQFVAVLGLGKYKILGSTIDDAIGETFDKVAKMLNLSFPGGPEIEKRAKLGNPHKYKFPKPIINSGNCNMSFSGLKTAVRNLIMSLKEVNDSVINDIAASFQFTIGAILSSKMLNAIRLYQQILNYYYENVDYTTNLNLKSFRQDEFNLNHLQDITRPKSRIYLQNSFRSNLLNDTIVIAGGVAANKYLQEILSNCTQTYGYRLIAPPMHLCTDNAAMIAYAGLERYNNKLFSPLNFCPKAKWSLEDI.

Fe cation is bound by residues His-112 and His-116. Substrate contacts are provided by residues 134–138 (LASGG), Asp-167, Gly-180, and Asn-325. Asp-353 contacts Fe cation.

Belongs to the KAE1 / TsaD family. Requires Fe(2+) as cofactor.

It localises to the cytoplasm. It catalyses the reaction L-threonylcarbamoyladenylate + adenosine(37) in tRNA = N(6)-L-threonylcarbamoyladenosine(37) in tRNA + AMP + H(+). In terms of biological role, required for the formation of a threonylcarbamoyl group on adenosine at position 37 (t(6)A37) in tRNAs that read codons beginning with adenine. Is involved in the transfer of the threonylcarbamoyl moiety of threonylcarbamoyl-AMP (TC-AMP) to the N6 group of A37, together with TsaE and TsaB. TsaD likely plays a direct catalytic role in this reaction. This is tRNA N6-adenosine threonylcarbamoyltransferase from Rickettsia typhi (strain ATCC VR-144 / Wilmington).